Consider the following 39-residue polypeptide: IFECVFSCDIKKEGKPCKPKGEKKCTGGWRCKIKLCLKI.

3 disulfide bridges follow: cysteine 4-cysteine 17, cysteine 8-cysteine 31, and cysteine 25-cysteine 36.

Belongs to the neurotoxin 12 (Hwtx-2) family. 06 (TXP1) subfamily. In terms of tissue distribution, expressed by the venom gland.

It localises to the secreted. Functionally, inhibits voltage-gated calcium channels (Cav) in rat cerebellar granule cells. Has insecticidal activity to crickets (Acheta domesticus). Is not toxic to mice. In Brachypelma albiceps (Mexican golden redrump tarantula), this protein is Omega-theraphotoxin-Ba1b.